The following is a 27-amino-acid chain: uncharacterized protein (27 aa).

Residues 3-23 (IILWAVLIIFLIGLLVVTGVF) traverse the membrane as a helical segment.

It is found in the cell inner membrane. This is an uncharacterized protein from Escherichia coli (strain K12).